We begin with the raw amino-acid sequence, 165 residues long: Fibrinogen-binding protein (165 aa).

Residues 1–29 form the signal peptide; sequence MKNKLIAKSLLTIAAIGITTTTIASTADA.

Interacts with host fibrinogen alpha chain/FGA. Interacts with host complement protein C3.

Its subcellular location is the secreted. Functionally, extracellular fibrinogen-binding protein that plays an important role in virulence. By interacting with the alpha chain of fibrinogen and its derivative fibrin, enhances a non-functional interaction between fibrinogen and platelets and is responsible for repression of fibrinogen-dependent platelet aggregation. In addition, assembles a fibrinogen protective shield around the bacteria which results in impaired phagocytic clearance by the host. Mechanistically, interacts with host complement C3b deposited on the surface of the bacterium via its C-terminal and then recruits fibrinogen via its N-terminal. This is Fibrinogen-binding protein (fib) from Staphylococcus aureus (strain MSSA476).